The primary structure comprises 423 residues: 3-phosphoshikimate 1-carboxyvinyltransferase (423 aa).

Residues Lys20, Ser21, and Arg25 each contribute to the 3-phosphoshikimate site. Lys20 provides a ligand contact to phosphoenolpyruvate. Gly91 and Arg119 together coordinate phosphoenolpyruvate. Positions 163, 164, 165, 305, 328, and 332 each coordinate 3-phosphoshikimate. Gln165 provides a ligand contact to phosphoenolpyruvate. The active-site Proton acceptor is the Asp305. Phosphoenolpyruvate contacts are provided by Arg336 and Arg377.

The protein belongs to the EPSP synthase family. As to quaternary structure, monomer.

It localises to the cytoplasm. It carries out the reaction 3-phosphoshikimate + phosphoenolpyruvate = 5-O-(1-carboxyvinyl)-3-phosphoshikimate + phosphate. The protein operates within metabolic intermediate biosynthesis; chorismate biosynthesis; chorismate from D-erythrose 4-phosphate and phosphoenolpyruvate: step 6/7. In terms of biological role, catalyzes the transfer of the enolpyruvyl moiety of phosphoenolpyruvate (PEP) to the 5-hydroxyl of shikimate-3-phosphate (S3P) to produce enolpyruvyl shikimate-3-phosphate and inorganic phosphate. The polypeptide is 3-phosphoshikimate 1-carboxyvinyltransferase (Acetivibrio thermocellus (strain ATCC 27405 / DSM 1237 / JCM 9322 / NBRC 103400 / NCIMB 10682 / NRRL B-4536 / VPI 7372) (Clostridium thermocellum)).